We begin with the raw amino-acid sequence, 210 residues long: Large ribosomal subunit protein uL3 (210 aa).

At Q151 the chain carries N5-methylglutamine.

This sequence belongs to the universal ribosomal protein uL3 family. As to quaternary structure, part of the 50S ribosomal subunit. Forms a cluster with proteins L14 and L19. Methylated by PrmB.

Its function is as follows. One of the primary rRNA binding proteins, it binds directly near the 3'-end of the 23S rRNA, where it nucleates assembly of the 50S subunit. This is Large ribosomal subunit protein uL3 from Aeromonas hydrophila subsp. hydrophila (strain ATCC 7966 / DSM 30187 / BCRC 13018 / CCUG 14551 / JCM 1027 / KCTC 2358 / NCIMB 9240 / NCTC 8049).